A 133-amino-acid polypeptide reads, in one-letter code: Large ribosomal subunit protein bL20 (133 aa).

It belongs to the bacterial ribosomal protein bL20 family.

Binds directly to 23S ribosomal RNA and is necessary for the in vitro assembly process of the 50S ribosomal subunit. It is not involved in the protein synthesizing functions of that subunit. This is Large ribosomal subunit protein bL20 from Chelativorans sp. (strain BNC1).